Consider the following 62-residue polypeptide: Photosystem II reaction center protein Z (62 aa).

The next 2 membrane-spanning stretches (helical) occupy residues 8–28 (AVFALIATSSILLISVPVVFA) and 41–61 (FSGTSLWITLVFLVGILNSLI).

This sequence belongs to the PsbZ family. PSII is composed of 1 copy each of membrane proteins PsbA, PsbB, PsbC, PsbD, PsbE, PsbF, PsbH, PsbI, PsbJ, PsbK, PsbL, PsbM, PsbT, PsbY, PsbZ, Psb30/Ycf12, at least 3 peripheral proteins of the oxygen-evolving complex and a large number of cofactors. It forms dimeric complexes.

Its subcellular location is the plastid. The protein localises to the chloroplast thylakoid membrane. Its function is as follows. May control the interaction of photosystem II (PSII) cores with the light-harvesting antenna, regulates electron flow through the 2 photosystem reaction centers. PSII is a light-driven water plastoquinone oxidoreductase, using light energy to abstract electrons from H(2)O, generating a proton gradient subsequently used for ATP formation. In Morus indica (Mulberry), this protein is Photosystem II reaction center protein Z.